The chain runs to 320 residues: Aspartate carbamoyltransferase catalytic subunit (320 aa).

The carbamoyl phosphate site is built by arginine 53 and threonine 54. Lysine 82 is an L-aspartate binding site. Carbamoyl phosphate contacts are provided by arginine 103, histidine 131, and glutamine 134. Residues arginine 164 and arginine 227 each coordinate L-aspartate. Residues leucine 266 and proline 267 each contribute to the carbamoyl phosphate site.

This sequence belongs to the aspartate/ornithine carbamoyltransferase superfamily. ATCase family. Heterododecamer (2C3:3R2) of six catalytic PyrB chains organized as two trimers (C3), and six regulatory PyrI chains organized as three dimers (R2).

It carries out the reaction carbamoyl phosphate + L-aspartate = N-carbamoyl-L-aspartate + phosphate + H(+). The protein operates within pyrimidine metabolism; UMP biosynthesis via de novo pathway; (S)-dihydroorotate from bicarbonate: step 2/3. Catalyzes the condensation of carbamoyl phosphate and aspartate to form carbamoyl aspartate and inorganic phosphate, the committed step in the de novo pyrimidine nucleotide biosynthesis pathway. This Bifidobacterium longum (strain NCC 2705) protein is Aspartate carbamoyltransferase catalytic subunit.